A 390-amino-acid chain; its full sequence is Magnesium-protoporphyrin IX monomethyl ester [oxidative] cyclase (390 aa).

Belongs to the AcsF family. It depends on Fe cation as a cofactor.

It catalyses the reaction Mg-protoporphyrin IX 13-monomethyl ester + 3 NADPH + 3 O2 + 2 H(+) = 3,8-divinyl protochlorophyllide a + 3 NADP(+) + 5 H2O. Its pathway is porphyrin-containing compound metabolism; chlorophyll biosynthesis (light-independent). In terms of biological role, catalyzes the formation of the isocyclic ring in chlorophyll biosynthesis. Mediates the cyclase reaction, which results in the formation of divinylprotochlorophyllide (Pchlide) characteristic of all chlorophylls from magnesium-protoporphyrin IX 13-monomethyl ester (MgPMME). In Prochlorococcus marinus (strain AS9601), this protein is Magnesium-protoporphyrin IX monomethyl ester [oxidative] cyclase.